A 539-amino-acid chain; its full sequence is Gamma-2-syntrophin (539 aa).

Residues 73-156 (TVTLRRQPVG…EVTITVEYLR (84 aa)) form the PDZ domain. 2 stretches are compositionally biased toward low complexity: residues 168 to 183 (SPGPSSDHSSGASSPL) and 194 to 205 (SSTTAPSSPSSP). Positions 168 to 209 (SPGPSSDHSSGASSPLFDSGLHLNGNSSTTAPSSPSSPIAKD) are disordered. In terms of domain architecture, PH spans 296 to 421 (QVVHMGWVNE…WEKSFQRATF (126 aa)).

It belongs to the syntrophin family. As to quaternary structure, interacts with the dystrophin protein DMD and related proteins DTNA and DTNB. Widely expressed. Strong expression in brain and testis. In CNS, it is expressed in the perikaryon and proximal portion of the neuronal processes. Strong expression in the hippocampus, neuron-rich dendate granule cells, and pyramidal cell layers. Highly expressed in neurons of the cerebral cortex. Also expressed in the cerebellar cortex, deep cerebellar nuclei, thalamus, and basal ganglia.

It localises to the cell membrane. It is found in the sarcolemma. Its subcellular location is the cytoplasm. The protein resides in the cytoskeleton. Adapter protein that binds to and probably organizes the subcellular localization of a variety of proteins. May link various receptors to the actin cytoskeleton and the dystrophin glycoprotein complex. The sequence is that of Gamma-2-syntrophin (SNTG2) from Homo sapiens (Human).